Reading from the N-terminus, the 217-residue chain is MQIYLDTANLDEIRTAASWGVLSGVTTNPSLMAKEKGADFKATIQEIASLVDGPISAEATSLDADGMVREGREFATWHPNVVVKVPSTTEGLKAVSRLARDGIRCNVTLCFNAVQALMAARAGAFIISPFVGRVDDVGVDGMSLIREIVQIYRAHNISTLVLAASIRHPRHIVEAALAGADIATCPFKVLEQSMRHPLTDIGIERFLADWKAWQQGR.

Lysine 84 acts as the Schiff-base intermediate with substrate in catalysis.

This sequence belongs to the transaldolase family. Type 3B subfamily.

The protein resides in the cytoplasm. The catalysed reaction is D-sedoheptulose 7-phosphate + D-glyceraldehyde 3-phosphate = D-erythrose 4-phosphate + beta-D-fructose 6-phosphate. Its pathway is carbohydrate degradation; pentose phosphate pathway; D-glyceraldehyde 3-phosphate and beta-D-fructose 6-phosphate from D-ribose 5-phosphate and D-xylulose 5-phosphate (non-oxidative stage): step 2/3. Functionally, transaldolase is important for the balance of metabolites in the pentose-phosphate pathway. In Roseiflexus castenholzii (strain DSM 13941 / HLO8), this protein is Probable transaldolase.